Consider the following 862-residue polypeptide: C-type lectin domain-containing protein 161 (862 aa).

The N-terminal stretch at 1–20 (MYRRTTLWFLLLFQPILVFA) is a signal peptide. Asn22 and Asn91 each carry an N-linked (GlcNAc...) asparagine glycan. The 114-residue stretch at 41-154 (SLNACFKLYN…VGQKLPFVCT (114 aa)) folds into the C-type lectin 1 domain. Cys62 and Cys153 are joined by a disulfide. Positions 162–291 (AGPAPVHAMR…SDESSDEAYD (130 aa)) are disordered. Residues 198–218 (SDKKEKKEVASDKKKESKKDE) are compositionally biased toward basic and acidic residues. Asn222 carries an N-linked (GlcNAc...) asparagine glycan. The segment covering 242–252 (SDKKESSKKDE) has biased composition (basic and acidic residues). Asn258, Asn279, and Asn352 each carry an N-linked (GlcNAc...) asparagine glycan. Residues 265–283 (ANAEMSASISASSANSSSD) show a composition bias toward low complexity. Disordered stretches follow at residues 377–437 (MTMR…SASL), 450–469 (ALASKSKSDSSDQSKDQKSA), and 474–504 (AVVSENKHPTKKPEDPKSTKTTTEEPDIDES). Residues 388-418 (SSSNTDSESASISESSQASEQAVMAAAMSAK) show a composition bias toward low complexity. 2 stretches are compositionally biased toward basic and acidic residues: residues 455–467 (SKSDSSDQSKDQK) and 478–491 (ENKHPTKKPEDPKS). Residue Asn559 is glycosylated (N-linked (GlcNAc...) asparagine). C-type lectin domains are found at residues 562-687 (APAL…SVLC) and 716-828 (KNGK…FVSV). A disulfide bond links Cys653 and Cys678. Asn765 carries an N-linked (GlcNAc...) asparagine glycan. Cysteines 807 and 819 form a disulfide. N-linked (GlcNAc...) asparagine glycosylation is found at Asn831 and Asn857.

It is found in the secreted. This chain is C-type lectin domain-containing protein 161 (clec-161), found in Caenorhabditis elegans.